The chain runs to 255 residues: 5-oxoprolinase subunit A (255 aa).

It belongs to the LamB/PxpA family. Forms a complex composed of PxpA, PxpB and PxpC.

It carries out the reaction 5-oxo-L-proline + ATP + 2 H2O = L-glutamate + ADP + phosphate + H(+). Catalyzes the cleavage of 5-oxoproline to form L-glutamate coupled to the hydrolysis of ATP to ADP and inorganic phosphate. The chain is 5-oxoprolinase subunit A from Rhodopseudomonas palustris (strain BisA53).